The chain runs to 87 residues: Small ribosomal subunit protein uS17 (87 aa).

The protein belongs to the universal ribosomal protein uS17 family. As to quaternary structure, part of the 30S ribosomal subunit.

Its function is as follows. One of the primary rRNA binding proteins, it binds specifically to the 5'-end of 16S ribosomal RNA. The protein is Small ribosomal subunit protein uS17 of Geobacillus kaustophilus (strain HTA426).